The following is a 436-amino-acid chain: Ribosomal protein uS12 methylthiotransferase RimO (436 aa).

Residues 2 to 114 form the MTTase N-terminal domain; the sequence is PNLYLVSLGC…IDEMILKKQN (113 aa). [4Fe-4S] cluster-binding residues include C11, C45, C77, C146, C150, and C153. The Radical SAM core domain maps to 132-363; the sequence is TGSSYHAYIK…IKKQIEGSFK (232 aa). In terms of domain architecture, TRAM spans 363 to 434; that stretch reads KSLVGEVIKV…KDKLIGEIIC (72 aa).

This sequence belongs to the methylthiotransferase family. RimO subfamily. It depends on [4Fe-4S] cluster as a cofactor.

It localises to the cytoplasm. It carries out the reaction L-aspartate(89)-[ribosomal protein uS12]-hydrogen + (sulfur carrier)-SH + AH2 + 2 S-adenosyl-L-methionine = 3-methylsulfanyl-L-aspartate(89)-[ribosomal protein uS12]-hydrogen + (sulfur carrier)-H + 5'-deoxyadenosine + L-methionine + A + S-adenosyl-L-homocysteine + 2 H(+). Its function is as follows. Catalyzes the methylthiolation of an aspartic acid residue of ribosomal protein uS12. This chain is Ribosomal protein uS12 methylthiotransferase RimO, found in Campylobacter fetus subsp. fetus (strain 82-40).